The following is a 162-amino-acid chain: MNPRRKKRLALVVGLIGGVAAVASLLLYALNTNLNLFYTPTEIAHGKADTGIKPEVGQRIRVGGMVTVGSMIRDPNSLHVEFAVHDAGGGEVIVTYDDLLPDLFREGQGIVAQGVLTEDGKLQASEVLAKHDENYMPPEVAEAMGKNHEKLEYTETQKGGSR.

The Cytoplasmic segment spans residues 1–8 (MNPRRKKR). Residues 9–29 (LALVVGLIGGVAAVASLLLYA) form a helical; Signal-anchor for type II membrane protein membrane-spanning segment. The Periplasmic segment spans residues 30–162 (LNTNLNLFYT…YTETQKGGSR (133 aa)). Histidine 131 and tyrosine 135 together coordinate heme.

It belongs to the CcmE/CycJ family.

The protein resides in the cell inner membrane. In terms of biological role, heme chaperone required for the biogenesis of c-type cytochromes. Transiently binds heme delivered by CcmC and transfers the heme to apo-cytochromes in a process facilitated by CcmF and CcmH. This is Cytochrome c-type biogenesis protein CcmE from Shewanella amazonensis (strain ATCC BAA-1098 / SB2B).